Here is a 126-residue protein sequence, read N- to C-terminus: uncharacterized protein (126 aa).

This is an uncharacterized protein from Agrobacterium tumefaciens (strain 15955).